The primary structure comprises 411 residues: Meiotically up-regulated gene 147 protein (411 aa).

Disordered regions lie at residues Met-1–Lys-52, Glu-102–Asp-137, and His-156–Ser-191. Polar residues predominate over residues Thr-33 to Glu-43. Residues His-156 to Thr-172 are compositionally biased toward basic and acidic residues.

Its subcellular location is the cytoplasm. The protein localises to the nucleus. Has a role in meiosis. The protein is Meiotically up-regulated gene 147 protein (mug147) of Schizosaccharomyces pombe (strain 972 / ATCC 24843) (Fission yeast).